Consider the following 420-residue polypeptide: Serine hydroxymethyltransferase (420 aa).

(6S)-5,6,7,8-tetrahydrofolate contacts are provided by residues Leu-121 and 125–127; that span reads GHL. Lys-229 carries the post-translational modification N6-(pyridoxal phosphate)lysine.

The protein belongs to the SHMT family. As to quaternary structure, homodimer. Pyridoxal 5'-phosphate serves as cofactor.

The protein localises to the cytoplasm. The catalysed reaction is (6R)-5,10-methylene-5,6,7,8-tetrahydrofolate + glycine + H2O = (6S)-5,6,7,8-tetrahydrofolate + L-serine. The protein operates within one-carbon metabolism; tetrahydrofolate interconversion. Its pathway is amino-acid biosynthesis; glycine biosynthesis; glycine from L-serine: step 1/1. Functionally, catalyzes the reversible interconversion of serine and glycine with tetrahydrofolate (THF) serving as the one-carbon carrier. This reaction serves as the major source of one-carbon groups required for the biosynthesis of purines, thymidylate, methionine, and other important biomolecules. Also exhibits THF-independent aldolase activity toward beta-hydroxyamino acids, producing glycine and aldehydes, via a retro-aldol mechanism. The protein is Serine hydroxymethyltransferase of Aggregatibacter actinomycetemcomitans (Actinobacillus actinomycetemcomitans).